A 152-amino-acid chain; its full sequence is Chemokine-like factor (152 aa).

One can recognise an MARVEL domain in the interval 13-133 (FCCTLKCFVK…DCALMCQKLR (121 aa)). A run of 4 helical transmembrane segments spans residues 19–39 (CFVK…FIVG), 46–66 (IVIT…YTCG), 81–101 (VINS…ALIP), and 108–128 (ILGG…CALM).

Belongs to the chemokine-like factor family. As to expression, ubiquitous.

The protein resides in the membrane. May play an important role in inflammation and regeneration of skeletal muscle. Essential for embryonic development. The chain is Chemokine-like factor (Cklf) from Mus musculus (Mouse).